Reading from the N-terminus, the 53-residue chain is Mannose/glucose-specific lectin alpha 1 chain (53 aa).

The protein belongs to the leguminous lectin family. Tetramer of two alpha and two beta chains.

The chain is Mannose/glucose-specific lectin alpha 1 chain from Lathyrus ochrus (Cyprus-vetch).